The primary structure comprises 171 residues: tRNA-specific adenosine deaminase (171 aa).

A CMP/dCMP-type deaminase domain is found at 6–133 (EEQTYFMQEA…ERLNHRVQVE (128 aa)). H57 provides a ligand contact to Zn(2+). E59 functions as the Proton donor in the catalytic mechanism. Zn(2+)-binding residues include C87 and C90.

Belongs to the cytidine and deoxycytidylate deaminase family. As to quaternary structure, homodimer. Zn(2+) is required as a cofactor.

The catalysed reaction is adenosine(34) in tRNA + H2O + H(+) = inosine(34) in tRNA + NH4(+). Its function is as follows. Catalyzes the deamination of adenosine to inosine at the wobble position 34 of tRNA(Arg2). This Streptococcus pyogenes serotype M1 protein is tRNA-specific adenosine deaminase.